Reading from the N-terminus, the 72-residue chain is MGSFSIWHWLIVLAVVLLLFGRGKIPELMGDVAKGIKNFKQGMADEDAKEDPRTIDAKAEEPVKDVKKTTKS.

A helical transmembrane segment spans residues 1–21; that stretch reads MGSFSIWHWLIVLAVVLLLFG. A disordered region spans residues 43–72; that stretch reads MADEDAKEDPRTIDAKAEEPVKDVKKTTKS. A compositionally biased stretch (basic and acidic residues) spans 50–72; the sequence is EDPRTIDAKAEEPVKDVKKTTKS.

This sequence belongs to the TatA/E family. In terms of assembly, the Tat system comprises two distinct complexes: a TatABC complex, containing multiple copies of TatA, TatB and TatC subunits, and a separate TatA complex, containing only TatA subunits. Substrates initially bind to the TatABC complex, which probably triggers association of the separate TatA complex to form the active translocon.

The protein localises to the cell inner membrane. Functionally, part of the twin-arginine translocation (Tat) system that transports large folded proteins containing a characteristic twin-arginine motif in their signal peptide across membranes. TatA could form the protein-conducting channel of the Tat system. The chain is Sec-independent protein translocase protein TatA from Brucella suis biovar 1 (strain 1330).